A 231-amino-acid polypeptide reads, in one-letter code: RNA pyrophosphohydrolase (231 aa).

The Nudix hydrolase domain maps to 6-149 (GFRPNVGIIL…KRDVYQLALT (144 aa)). The Nudix box motif lies at 38–59 (GGIKYGETPEQAMYRELHEEIG). Residues 168–200 (VHHGRHGSGQRYAQQPGQPPTLAQRRPLQPVTQ) form a disordered region.

This sequence belongs to the Nudix hydrolase family. RppH subfamily. A divalent metal cation serves as cofactor.

Functionally, accelerates the degradation of transcripts by removing pyrophosphate from the 5'-end of triphosphorylated RNA, leading to a more labile monophosphorylated state that can stimulate subsequent ribonuclease cleavage. This chain is RNA pyrophosphohydrolase, found in Cupriavidus pinatubonensis (strain JMP 134 / LMG 1197) (Cupriavidus necator (strain JMP 134)).